Reading from the N-terminus, the 303-residue chain is MSSAPASGSVRARYLVYFQYVGTDFNGVAAVRGTQRAVGVQNYLEEAAERLNSVEPVRFTISSRTDAGVHALSNAAHLDVQRRSGRPPFPPEVLAEALNTHLRHPAIRVLRAFRVPSDFHARHAATSRTYLYRLATGCHRRDELPVFERNLCWTLPADCLDMVAMQEAAQHLLGTHDFSAFQSAGSPVPSPVRTLRRVSVSPGQASPLVTPEESRKLRFWNLEFESQSFLYRQVRRMTAVLVAVGLGALAPAQVKTILESQDPLGKHQTRVAPAHGLFLKSVLYGNLGAASCTLQGPQFGSHG.

The active-site Nucleophile is Asp66. Ser84 carries the phosphoserine modification. Tyr130 serves as a coordination point for substrate.

It belongs to the tRNA pseudouridine synthase TruA family.

The catalysed reaction is a uridine in tRNA = a pseudouridine in tRNA. The protein is tRNA pseudouridine synthase-like 1 (PUSL1) of Homo sapiens (Human).